Consider the following 636-residue polypeptide: 1-deoxy-D-xylulose-5-phosphate synthase (636 aa).

Thiamine diphosphate contacts are provided by residues His-72 and 113–115 (GHA). Asp-144 contacts Mg(2+). Thiamine diphosphate-binding positions include 145 to 146 (GS), Asn-174, Tyr-287, and Glu-370. Asn-174 serves as a coordination point for Mg(2+).

This sequence belongs to the transketolase family. DXPS subfamily. As to quaternary structure, homodimer. Requires Mg(2+) as cofactor. Thiamine diphosphate serves as cofactor.

It catalyses the reaction D-glyceraldehyde 3-phosphate + pyruvate + H(+) = 1-deoxy-D-xylulose 5-phosphate + CO2. Its pathway is metabolic intermediate biosynthesis; 1-deoxy-D-xylulose 5-phosphate biosynthesis; 1-deoxy-D-xylulose 5-phosphate from D-glyceraldehyde 3-phosphate and pyruvate: step 1/1. Functionally, catalyzes the acyloin condensation reaction between C atoms 2 and 3 of pyruvate and glyceraldehyde 3-phosphate to yield 1-deoxy-D-xylulose-5-phosphate (DXP). The sequence is that of 1-deoxy-D-xylulose-5-phosphate synthase from Synechococcus sp. (strain ATCC 27144 / PCC 6301 / SAUG 1402/1) (Anacystis nidulans).